The primary structure comprises 726 residues: PTS system glucose-specific EIICBA component (726 aa).

The PTS EIIC type-1 domain maps to 1 to 453 (MMKDTFKNVL…FNYATPGRNG (453 aa)). The next 9 helical transmembrane spans lie at 18–38 (FGKALMVVIAVMPAAGLMISI), 62–82 (IGWGVIGNLHILFALAIGGSW), 90–110 (AFAAGLAFILINRITGTIFGV), 139–159 (VLEAPALNMGVFVGIISGFVG), 184–204 (FVPFVVILRSAIAAILLAAFW), 311–331 (FKVGQMIGSFGILMGVIVAIY), 344–364 (GMMIATALATFLTGVTEPIEY), 365–385 (MFMFIATPMYLVYSLVQGAAF), and 419–439 (IVNFVWVTVLFAVIMYFIANF). Residues 473 to 555 (GSQAVNIINL…QDILDSGEII (83 aa)) enclose the PTS EIIB type-1 domain. Cys495 functions as the Phosphocysteine intermediate; for EIIB activity in the catalytic mechanism. The PTS EIIA type-1 domain occupies 596–700 (DPVFAQKMMG…ETSTVVVFTN (105 aa)). The active-site Tele-phosphohistidine intermediate; for EIIA activity is the His648.

It localises to the cell membrane. The enzyme catalyses N(pros)-phospho-L-histidyl-[protein] + D-glucose(out) = D-glucose 6-phosphate(in) + L-histidyl-[protein]. Functionally, the phosphoenolpyruvate-dependent sugar phosphotransferase system (sugar PTS), a major carbohydrate active transport system, catalyzes the phosphorylation of incoming sugar substrates concomitantly with their translocation across the cell membrane. This system is involved in glucose transport. This chain is PTS system glucose-specific EIICBA component (exp5), found in Streptococcus pneumoniae serotype 4 (strain ATCC BAA-334 / TIGR4).